The following is a 213-amino-acid chain: Chloramphenicol acetyltransferase 3 (213 aa).

The active-site Proton acceptor is the histidine 189.

This sequence belongs to the chloramphenicol acetyltransferase family. As to quaternary structure, homotrimer.

It catalyses the reaction chloramphenicol + acetyl-CoA = chloramphenicol 3-acetate + CoA. In terms of biological role, this enzyme is an effector of chloramphenicol resistance in bacteria. This Escherichia coli protein is Chloramphenicol acetyltransferase 3 (cat3).